Consider the following 417-residue polypeptide: Serine hydroxymethyltransferase (417 aa).

Residues Leu121 and 125–127 contribute to the (6S)-5,6,7,8-tetrahydrofolate site; that span reads GHL. The residue at position 229 (Lys229) is an N6-(pyridoxal phosphate)lysine. (6S)-5,6,7,8-tetrahydrofolate is bound at residue 355-357; it reads SSF.

It belongs to the SHMT family. Homodimer. Pyridoxal 5'-phosphate is required as a cofactor.

Its subcellular location is the cytoplasm. The enzyme catalyses (6R)-5,10-methylene-5,6,7,8-tetrahydrofolate + glycine + H2O = (6S)-5,6,7,8-tetrahydrofolate + L-serine. It functions in the pathway one-carbon metabolism; tetrahydrofolate interconversion. The protein operates within amino-acid biosynthesis; glycine biosynthesis; glycine from L-serine: step 1/1. Catalyzes the reversible interconversion of serine and glycine with tetrahydrofolate (THF) serving as the one-carbon carrier. This reaction serves as the major source of one-carbon groups required for the biosynthesis of purines, thymidylate, methionine, and other important biomolecules. Also exhibits THF-independent aldolase activity toward beta-hydroxyamino acids, producing glycine and aldehydes, via a retro-aldol mechanism. In Baumannia cicadellinicola subsp. Homalodisca coagulata, this protein is Serine hydroxymethyltransferase.